The chain runs to 558 residues: Energy-dependent translational throttle protein EttA (558 aa).

ABC transporter domains are found at residues 6-256 (YTMK…AVQG) and 322-552 (VEVD…RVTH). 38-45 (GPNGAGKS) contributes to the ATP binding site. The arm stretch occupies residues 94–136 (GDIKIKLDRFNEVAELMATDYTDELMEEMGRLQEELDHADAWD). The segment at 239–320 (GNYSTYLEKK…IPVGPRLGNV (82 aa)) is ptIM. ATP is bound at residue 354-361 (GPNGVGKT).

The protein belongs to the ABC transporter superfamily. ABCF family. Translational throttle EttA subfamily. In terms of assembly, monomer. Probably contacts ribosomal proteins L1, L5, L33 and S7, the 16S and 23S rRNA and the P-site containing tRNA(fMet).

It is found in the cytoplasm. The catalysed reaction is ATP + H2O = ADP + phosphate + H(+). In terms of biological role, a translation factor that gates the progression of the 70S ribosomal initiation complex (IC, containing tRNA(fMet) in the P-site) into the translation elongation cycle by using a mechanism sensitive to the ATP/ADP ratio. Binds to the 70S ribosome E-site where it modulates the state of the translating ribosome during subunit translocation. ATP hydrolysis probably frees it from the ribosome, which can enter the elongation phase. The chain is Energy-dependent translational throttle protein EttA from Mycobacterium tuberculosis (strain CDC 1551 / Oshkosh).